The sequence spans 297 residues: Coiled-coil domain-containing protein 196 (297 aa).

The stretch at 83–117 (ESSVMELLKEAEEMKQNLERKNKMLRKEMEMLWNK) forms a coiled coil. A disordered region spans residues 122-161 (EELSDQQKAPQTKNKADLQDGKAPKSPSSPRKTESELEKS). 2 stretches are compositionally biased toward basic and acidic residues: residues 135–144 (NKADLQDGKA) and 152–161 (RKTESELEKS).

The polypeptide is Coiled-coil domain-containing protein 196 (Homo sapiens (Human)).